The chain runs to 716 residues: MSGSKKKKVTKAERLKLLQEEEERRLKEEEEARLKYEKEEMERLEIQRIEKEKWHRLEAKDLERRNEELEELYLLERCFPEAEKLKQETKLLSQWKHYIQCDGSPDPSVAQEMNTFISLWKEKTNETFEEVIEKSKVVLNLIEKLKFILLETPPCDLQDKNIIQYQESILQLQELLHLKFGVATEILLKQASTLADLDSGNMEKVIKDENVTLYVWANLKKNPRHRSVRFSETQIGFEIPRILATSDIAVRLLHTHYDHVSALHPVSTPSKEYTSAVTELVKDDVKNVEKAISKEVEEESKQQERGSHLIQEEEIKVEEEQGDIEVKMSSAEEESEAIKCEREMKVLSETVSAAQLLLVENSSEKPDFFEDNVVDLCQFTTLGGVYHLDILELPPQCKPVKGWMIVEILKEGLQKYTYPPETTEEFETENAFPPIEVTLEVHENVIFFEDPVVVRWDAEGKHWRTDGISNVSYKPKERLVTFSLDTFGPVTLIQDAHINMPYQSWELRPLDVNKVLLTVTTVFTEIQIQIKENLCMLSSIKLKDKKHISILEGTWMTPIPFIIALKEAGLNIFPTRHSHFYVIINNKVPLVEVKAYRQMALLSSAFAFGWSKWNLLCNSTKVVFKVREHLTEACTENPNWALLMFSGDRAQRLKIKEESEAFSEALKEETEFHSTLYHMVKDFASEEAMEKVRSSNCQFVNSVCHMLLSTRLLSYS.

It belongs to the DNAI7 family. Part of the multisubunit axonemal dynein complex formed at least of two heavy chains and a number of intermediate and light chains. Interacts with tubulin. Associates with microtubule. Ubiquitinated. Ubiquitination leads to its degradation through the 26S proteasome. Ubiquitin-proteasome-mediated DNAI7 degradation occurs in mitosis.

It is found in the cell projection. It localises to the cilium. The protein resides in the cytoplasm. Via its association with the multisubunit axonemal dynein complex, is potentially involved in the regulation of cilia function. May also act as a cell cycle regulator. This chain is Dynein axonemal intermediate chain 7, found in Homo sapiens (Human).